The sequence spans 135 residues: Ribonuclease P protein component (135 aa).

This sequence belongs to the RnpA family. As to quaternary structure, consists of a catalytic RNA component (M1 or rnpB) and a protein subunit.

It carries out the reaction Endonucleolytic cleavage of RNA, removing 5'-extranucleotides from tRNA precursor.. Its function is as follows. RNaseP catalyzes the removal of the 5'-leader sequence from pre-tRNA to produce the mature 5'-terminus. It can also cleave other RNA substrates such as 4.5S RNA. The protein component plays an auxiliary but essential role in vivo by binding to the 5'-leader sequence and broadening the substrate specificity of the ribozyme. The sequence is that of Ribonuclease P protein component from Xylella fastidiosa (strain Temecula1 / ATCC 700964).